The following is a 1082-amino-acid chain: Importin-4 (1082 aa).

Residue M1 is modified to N-acetylmethionine. An Importin N-terminal domain is found at 24-90; that stretch reads ATEQLQTILR…KSLVLTALQK (67 aa). HEAT repeat units lie at residues 348-385, 390-427, 431-471, 475-513, 896-933, and 937-975; these read KLCP…GAGD, RLLY…NLQP, SYSE…NLGP, PYLP…AAQD, QFVS…HGGC, and DHFP…ASPV.

The protein belongs to the importin beta family. As to quaternary structure, found in a cytosolic complex with ASF1 (ASF1A or ASF1B) and histones H3 and H4.

The protein resides in the cytoplasm. It localises to the nucleus. Its function is as follows. Nuclear transport receptor that mediates nuclear import of proteins, such as histones, RPS3A, TNP2 and VDR. Serves as receptor for nuclear localization signals (NLS) in cargo substrates. Is thought to mediate docking of the importin/substrate complex to the nuclear pore complex (NPC) through binding to nucleoporin and the complex is subsequently translocated through the pore by an energy requiring, Ran-dependent mechanism. At the nucleoplasmic side of the NPC, Ran binds to the importin, the importin/substrate complex dissociates and importin is re-exported from the nucleus to the cytoplasm where GTP hydrolysis releases Ran. The directionality of nuclear import is thought to be conferred by an asymmetric distribution of the GTP- and GDP-bound forms of Ran between the cytoplasm and nucleus. Mediates the nuclear import of the histone H3-H4 dimer when in complex with ASF1 (ASF1A or ASF1B). Mediates the ligand-independent nuclear import of vitamin D receptor (VDR). In Mus musculus (Mouse), this protein is Importin-4 (Ipo4).